A 269-amino-acid chain; its full sequence is Hydroxyethylthiazole kinase (269 aa).

Substrate is bound at residue Met45. ATP contacts are provided by Arg121 and Thr167. Gly194 provides a ligand contact to substrate.

This sequence belongs to the Thz kinase family. It depends on Mg(2+) as a cofactor.

The catalysed reaction is 5-(2-hydroxyethyl)-4-methylthiazole + ATP = 4-methyl-5-(2-phosphooxyethyl)-thiazole + ADP + H(+). It functions in the pathway cofactor biosynthesis; thiamine diphosphate biosynthesis; 4-methyl-5-(2-phosphoethyl)-thiazole from 5-(2-hydroxyethyl)-4-methylthiazole: step 1/1. In terms of biological role, catalyzes the phosphorylation of the hydroxyl group of 4-methyl-5-beta-hydroxyethylthiazole (THZ). The sequence is that of Hydroxyethylthiazole kinase from Bacillus cytotoxicus (strain DSM 22905 / CIP 110041 / 391-98 / NVH 391-98).